We begin with the raw amino-acid sequence, 158 residues long: Transcription elongation factor GreA (158 aa).

This sequence belongs to the GreA/GreB family.

Its function is as follows. Necessary for efficient RNA polymerase transcription elongation past template-encoded arresting sites. The arresting sites in DNA have the property of trapping a certain fraction of elongating RNA polymerases that pass through, resulting in locked ternary complexes. Cleavage of the nascent transcript by cleavage factors such as GreA or GreB allows the resumption of elongation from the new 3'terminus. GreA releases sequences of 2 to 3 nucleotides. This chain is Transcription elongation factor GreA, found in Sinorhizobium medicae (strain WSM419) (Ensifer medicae).